We begin with the raw amino-acid sequence, 276 residues long: Streptothricin hydrolase (276 aa).

Cys176 (nucleophile) is an active-site residue. The segment at 250–276 is disordered; it reads PEAPAAAAAPAAGTGLSPAGPPPAPAR. The segment covering 252–267 has biased composition (low complexity); it reads APAAAAAPAAGTGLSP.

Belongs to the isochorismatase family. In terms of assembly, homodimer. Does not require a metal cofactor. serves as cofactor.

It catalyses the reaction streptothricin F + H2O = streptothricin F acid. In terms of biological role, catalyzes the hydrolysis of the amide bond of streptolidine lactam, thereby conferring streptothricin (ST) resistance. Can hydrolyze streptothricin-F and streptothricin-D. However, this strain is believed to be a ST nonproducer, which raises the possibility that its true role may not be its involvement in self-resistance to STs. May catalyze the hydrolysis of naturally occurring cyclic amide compounds that are structurally related to STs. The protein is Streptothricin hydrolase (sttH) of Streptomyces noursei (Streptomyces albulus).